The following is a 1543-amino-acid chain: Tubby-related protein 4 (1543 aa).

WD repeat units lie at residues 6–72, 73–115, 116–158, 159–237, 238–276, 277–334, and 335–372; these read EHGP…STPQ, RINF…YEGR, WSVE…SGQR, HWSS…SDDY, APPQ…YDDL, SPTV…GEHI, and FTLD…RVEH. The 51-residue stretch at 364–414 folds into the SOCS box domain; the sequence is ALYVVRVEHRVSSLQLLCQQAIASTLREDKDVSKLTLPPRLCSYLSTAFIP. Disordered regions lie at residues 530–577 and 829–850; these read SPKI…SVGS and TKIN…TAAP. Serine 577 is modified (phosphoserine). 2 positions are modified to asymmetric dimethylarginine: arginine 945 and arginine 950. 3 disordered regions span residues 1004 to 1058, 1326 to 1355, and 1367 to 1453; these read SPRA…HTAS, VPQR…AITE, and DFNS…ASEK. Residues 1036-1050 show a composition bias toward polar residues; that stretch reads TCSQCSGTGPSSQPG. Basic and acidic residues predominate over residues 1329–1347; the sequence is RTEKFGKKNRKRLDSRAEE. Phosphoserine is present on residues serine 1343 and serine 1374. Basic and acidic residues predominate over residues 1443 to 1453; that stretch reads EEAKCRRASEK. Residues 1466–1543 form a TUB region; that stretch reads VMANKQPLWN…ALANVTQRLK (78 aa).

Belongs to the TUB family. In terms of tissue distribution, expressed mainly in the brain, skeletal muscle, testis and kidney.

The protein resides in the cytoplasm. It functions in the pathway protein modification; protein ubiquitination. Functionally, may be a substrate-recognition component of a SCF-like ECS (Elongin-Cullin-SOCS-box protein) E3 ubiquitin ligase complex which mediates the ubiquitination and subsequent proteasomal degradation of target proteins. The polypeptide is Tubby-related protein 4 (TULP4) (Homo sapiens (Human)).